The sequence spans 154 residues: Myoglobin (154 aa).

In terms of domain architecture, Globin spans G2–K148. The residue at position 4 (S4) is a Phosphoserine. Residue H65 participates in nitrite binding. H65 contributes to the O2 binding site. T68 carries the post-translational modification Phosphothreonine. H94 serves as a coordination point for heme b.

Belongs to the globin family. Monomeric.

The protein resides in the cytoplasm. It localises to the sarcoplasm. It catalyses the reaction Fe(III)-heme b-[protein] + nitric oxide + H2O = Fe(II)-heme b-[protein] + nitrite + 2 H(+). The enzyme catalyses H2O2 + AH2 = A + 2 H2O. Its function is as follows. Monomeric heme protein which primary function is to store oxygen and facilitate its diffusion within muscle tissues. Reversibly binds oxygen through a pentacoordinated heme iron and enables its timely and efficient release as needed during periods of heightened demand. Depending on the oxidative conditions of tissues and cells, and in addition to its ability to bind oxygen, it also has a nitrite reductase activity whereby it regulates the production of bioactive nitric oxide. Under stress conditions, like hypoxia and anoxia, it also protects cells against reactive oxygen species thanks to its pseudoperoxidase activity. This is Myoglobin (MB) from Orcinus orca (Killer whale).